Reading from the N-terminus, the 137-residue chain is Large-conductance mechanosensitive channel (137 aa).

A run of 3 helical transmembrane segments spans residues 15 to 35 (VDLA…NSIV), 38 to 58 (IIMP…MFIQ), and 80 to 100 (GNFV…FLVV).

The protein belongs to the MscL family. As to quaternary structure, homopentamer.

It localises to the cell inner membrane. In terms of biological role, channel that opens in response to stretch forces in the membrane lipid bilayer. May participate in the regulation of osmotic pressure changes within the cell. In Brucella anthropi (strain ATCC 49188 / DSM 6882 / CCUG 24695 / JCM 21032 / LMG 3331 / NBRC 15819 / NCTC 12168 / Alc 37) (Ochrobactrum anthropi), this protein is Large-conductance mechanosensitive channel.